Reading from the N-terminus, the 1162-residue chain is Nucleoporin nup132 (1162 aa).

The protein belongs to the nucleoporin Nup133 family. As to quaternary structure, component of the npc107-120 complex which consists of nup85, nup107, nup120, nup131, nup132 and seh1. Interacts with nup107.

It is found in the nucleus envelope. Functions as a component of the nuclear pore complex (NPC). NPC components, collectively referred to as nucleoporins (NUPs), can play the role of both NPC structural components and of docking or interaction partners for transiently associated nuclear transport factors. Active directional transport is assured by both, a Phe-Gly (FG) repeat affinity gradient for these transport factors across the NPC and a transport cofactor concentration gradient across the nuclear envelope. In Schizosaccharomyces pombe (strain 972 / ATCC 24843) (Fission yeast), this protein is Nucleoporin nup132 (nup132).